Consider the following 1091-residue polypeptide: Isoleucine--tRNA ligase (1091 aa).

Residues Pro-48–His-58 carry the 'HIGH' region motif. A 'KMSKS' region motif is present at residues Lys-625 to Ala-629. Lys-628 serves as a coordination point for ATP.

This sequence belongs to the class-I aminoacyl-tRNA synthetase family. IleS type 2 subfamily. Monomer. Requires Zn(2+) as cofactor.

The protein resides in the cytoplasm. It carries out the reaction tRNA(Ile) + L-isoleucine + ATP = L-isoleucyl-tRNA(Ile) + AMP + diphosphate. Functionally, catalyzes the attachment of isoleucine to tRNA(Ile). As IleRS can inadvertently accommodate and process structurally similar amino acids such as valine, to avoid such errors it has two additional distinct tRNA(Ile)-dependent editing activities. One activity is designated as 'pretransfer' editing and involves the hydrolysis of activated Val-AMP. The other activity is designated 'posttransfer' editing and involves deacylation of mischarged Val-tRNA(Ile). This Treponema pallidum (strain Nichols) protein is Isoleucine--tRNA ligase.